Consider the following 133-residue polypeptide: uncharacterized protein (133 aa).

The next 2 membrane-spanning stretches (helical) occupy residues 13–33 and 73–93; these read FLLSVVGSGNSLSILNGLFLS and FGNPLVTSLNIMYSLFYLLLL.

The protein localises to the membrane. This is an uncharacterized protein from Saccharomyces cerevisiae (strain ATCC 204508 / S288c) (Baker's yeast).